A 105-amino-acid chain; its full sequence is uncharacterized protein (105 aa).

This is an uncharacterized protein from Paracoccus denitrificans.